Consider the following 1450-residue polypeptide: M-protein, striated muscle (1450 aa).

The tract at residues 66–87 is disordered; the sequence is AHEAMQESRKRTHEQKSHASDE. Ig-like C2-type domains lie at 142–233 and 254–359; these read PEIL…CAVV and PLSY…AFLF. Fibronectin type-III domains lie at 373 to 468, 501 to 596, 602 to 695, 698 to 800, and 803 to 900; these read APMD…ALDP, PPTN…PQDI, APGR…VQAA, CPSY…TMPE, and PAYD…ASPG. 5 Ig-like C2-type domains span residues 899–995, 1002–1115, 1118–1204, 1225–1322, and 1333–1422; these read PGTK…LMTL, PTIP…FLRK, PHFS…LELS, PLKI…QRLK, and KVIG…VTVS.

In terms of tissue distribution, expressed in pectoralis and cardiac muscle.

Its function is as follows. Is a structural constituent of myofibrillar M-band in striated muscle. This chain is M-protein, striated muscle, found in Gallus gallus (Chicken).